The primary structure comprises 995 residues: Bifunctional glutamine synthetase adenylyltransferase/adenylyl-removing enzyme (995 aa).

The interval methionine 1 to aspartate 474 is adenylyl removase. 2 glnE regions span residues arginine 122–glutamine 333 and serine 637–alanine 853. An adenylyl transferase region spans residues alanine 479–arginine 995.

The protein belongs to the GlnE family. The cofactor is Mg(2+).

It catalyses the reaction [glutamine synthetase]-O(4)-(5'-adenylyl)-L-tyrosine + phosphate = [glutamine synthetase]-L-tyrosine + ADP. It carries out the reaction [glutamine synthetase]-L-tyrosine + ATP = [glutamine synthetase]-O(4)-(5'-adenylyl)-L-tyrosine + diphosphate. Functionally, involved in the regulation of glutamine synthetase GlnA, a key enzyme in the process to assimilate ammonia. When cellular nitrogen levels are high, the C-terminal adenylyl transferase (AT) inactivates GlnA by covalent transfer of an adenylyl group from ATP to specific tyrosine residue of GlnA, thus reducing its activity. Conversely, when nitrogen levels are low, the N-terminal adenylyl removase (AR) activates GlnA by removing the adenylyl group by phosphorolysis, increasing its activity. The regulatory region of GlnE binds the signal transduction protein PII (GlnB) which indicates the nitrogen status of the cell. The chain is Bifunctional glutamine synthetase adenylyltransferase/adenylyl-removing enzyme from Bradyrhizobium diazoefficiens (strain JCM 10833 / BCRC 13528 / IAM 13628 / NBRC 14792 / USDA 110).